Consider the following 338-residue polypeptide: Large ribosomal subunit protein uL10 (338 aa).

Residues 297–338 (PSAQQTQTQQSTAEEKKEEKKEEEKKGPSEEEIGSGLASLFG) form a disordered region. Residues 298–308 (SAQQTQTQQST) show a composition bias toward low complexity. Positions 309–325 (AEEKKEEKKEEEKKGPS) are enriched in basic and acidic residues.

This sequence belongs to the universal ribosomal protein uL10 family. In terms of assembly, part of the 50S ribosomal subunit. Forms part of the ribosomal stalk which helps the ribosome interact with GTP-bound translation factors. Forms a heptameric L10(L12)2(L12)2(L12)2 complex, where L10 forms an elongated spine to which the L12 dimers bind in a sequential fashion.

In terms of biological role, forms part of the ribosomal stalk, playing a central role in the interaction of the ribosome with GTP-bound translation factors. This Saccharolobus islandicus (strain M.14.25 / Kamchatka #1) (Sulfolobus islandicus) protein is Large ribosomal subunit protein uL10.